The sequence spans 226 residues: Cytidylate kinase (226 aa).

10–18 (GPASSGKST) contributes to the ATP binding site.

Belongs to the cytidylate kinase family. Type 1 subfamily.

The protein localises to the cytoplasm. It carries out the reaction CMP + ATP = CDP + ADP. It catalyses the reaction dCMP + ATP = dCDP + ADP. The protein is Cytidylate kinase of Streptococcus pyogenes serotype M4 (strain MGAS10750).